Reading from the N-terminus, the 308-residue chain is UDP-N-acetylenolpyruvoylglucosamine reductase (308 aa).

The region spanning 32-196 (VGGPAARLYK…ISAKLQLSPG (165 aa)) is the FAD-binding PCMH-type domain. Residue Arg176 is part of the active site. The active-site Proton donor is the Ser225. Residue Glu296 is part of the active site.

Belongs to the MurB family. The cofactor is FAD.

It localises to the cytoplasm. The catalysed reaction is UDP-N-acetyl-alpha-D-muramate + NADP(+) = UDP-N-acetyl-3-O-(1-carboxyvinyl)-alpha-D-glucosamine + NADPH + H(+). It functions in the pathway cell wall biogenesis; peptidoglycan biosynthesis. In terms of biological role, cell wall formation. In Legionella pneumophila (strain Lens), this protein is UDP-N-acetylenolpyruvoylglucosamine reductase.